A 387-amino-acid polypeptide reads, in one-letter code: UDP-N-acetylglucosamine--N-acetylmuramyl-(pentapeptide) pyrophosphoryl-undecaprenol N-acetylglucosamine transferase (387 aa).

UDP-N-acetyl-alpha-D-glucosamine-binding positions include 23–25 (TGG), asparagine 135, arginine 174, serine 203, isoleucine 261, 280–285 (ALTVSE), and glutamine 306.

Belongs to the glycosyltransferase 28 family. MurG subfamily.

The protein resides in the cell inner membrane. It catalyses the reaction di-trans,octa-cis-undecaprenyl diphospho-N-acetyl-alpha-D-muramoyl-L-alanyl-D-glutamyl-meso-2,6-diaminopimeloyl-D-alanyl-D-alanine + UDP-N-acetyl-alpha-D-glucosamine = di-trans,octa-cis-undecaprenyl diphospho-[N-acetyl-alpha-D-glucosaminyl-(1-&gt;4)]-N-acetyl-alpha-D-muramoyl-L-alanyl-D-glutamyl-meso-2,6-diaminopimeloyl-D-alanyl-D-alanine + UDP + H(+). It functions in the pathway cell wall biogenesis; peptidoglycan biosynthesis. Cell wall formation. Catalyzes the transfer of a GlcNAc subunit on undecaprenyl-pyrophosphoryl-MurNAc-pentapeptide (lipid intermediate I) to form undecaprenyl-pyrophosphoryl-MurNAc-(pentapeptide)GlcNAc (lipid intermediate II). The chain is UDP-N-acetylglucosamine--N-acetylmuramyl-(pentapeptide) pyrophosphoryl-undecaprenol N-acetylglucosamine transferase from Colwellia psychrerythraea (strain 34H / ATCC BAA-681) (Vibrio psychroerythus).